The following is a 214-amino-acid chain: High frequency lysogenization protein HflD homolog (214 aa).

This sequence belongs to the HflD family.

The protein resides in the cytoplasm. It is found in the cell inner membrane. This Chromohalobacter salexigens (strain ATCC BAA-138 / DSM 3043 / CIP 106854 / NCIMB 13768 / 1H11) protein is High frequency lysogenization protein HflD homolog.